The following is a 177-amino-acid chain: RNA pyrophosphohydrolase (177 aa).

Residues Gly6–Lys149 enclose the Nudix hydrolase domain. The short motif at Gly38 to Gly59 is the Nudix box element.

The protein belongs to the Nudix hydrolase family. RppH subfamily. The cofactor is a divalent metal cation.

Functionally, accelerates the degradation of transcripts by removing pyrophosphate from the 5'-end of triphosphorylated RNA, leading to a more labile monophosphorylated state that can stimulate subsequent ribonuclease cleavage. The protein is RNA pyrophosphohydrolase of Edwardsiella ictaluri (strain 93-146).